The sequence spans 346 residues: Glucose-6-phosphatase 3 (346 aa).

Residues 1 to 24 (MESTLSAGIIMAEALQNRLPGLEN) lie on the Lumenal side of the membrane. Residues 25–45 (MWLWVTFLGDPKNLFQFCFPA) traverse the membrane as a helical segment. Residues 46-56 (AYYASRRLGIS) lie on the Cytoplasmic side of the membrane. Residues 57 to 77 (VLWITFIAEWLNLVFKWFLFG) traverse the membrane as a helical segment. Residues 78-108 (DRPFWWVHESGYSTQTPIQIHQFPSSCETGP) lie on the Lumenal side of the membrane. Arg79 contacts substrate. A helical transmembrane segment spans residues 109–129 (GSPSGHCMITGAALWPVMTAI). The Proton donor role is filled by His114. The Cytoplasmic portion of the chain corresponds to 130–138 (SSQVASRSR). The helical transmembrane segment at 139–159 (SPWVRVIPGLAYCTFLLAVGL) threads the bilayer. The Lumenal segment spans residues 160 to 167 (SRVFLLAH). A substrate-binding site is contributed by Arg161. Residue His167 is the Nucleophile of the active site. The chain crosses the membrane as a helical span at residues 168–186 (FPHQVLGGLIVGAALGWLM). The Cytoplasmic portion of the chain corresponds to 187–197 (SPRVPMERELS). A helical membrane pass occupies residues 198-218 (FYGLTALALMLGASLMYWTLF). Residues 219–254 (TLGLDLSWSINLASKWCERPEWVHMDSRPFASLSRD) are Lumenal-facing. A helical membrane pass occupies residues 255–273 (SGSALGLGIALHTPCYAQI). Residues 274-283 (RRAHLGNGQK) are Cytoplasmic-facing. The helical transmembrane segment at 284–304 (IACFVLAMGLLVFLEWLGYPP) threads the bilayer. Residues 305 to 307 (QIS) are Lumenal-facing. The chain crosses the membrane as a helical span at residues 308–328 (LFYIFNFLKYTLWPCLVLALV). The Cytoplasmic segment spans residues 329–346 (PWVVHTLSDQEAPPIRSS).

This sequence belongs to the glucose-6-phosphatase family. Widely expressed. Highly expressed in heart and testis and to a lower extent in spleen, stomach, small intestine, skeletal muscle and uterus. Expressed in muscle, brain, thymus, lung, kidney, spleen and pancreas (at protein level). In the brain, expressed in astrocytes (at protein level).

It localises to the endoplasmic reticulum membrane. The enzyme catalyses D-glucose 6-phosphate + H2O = D-glucose + phosphate. It participates in carbohydrate biosynthesis; gluconeogenesis. Inhibited by vanadate. Hydrolyzes glucose-6-phosphate to glucose in the endoplasmic reticulum. May form with the glucose-6-phosphate transporter (SLC37A4/G6PT) a ubiquitously expressed complex responsible for glucose production through glycogenolysis and gluconeogenesis. Probably required for normal neutrophil function. In Mus musculus (Mouse), this protein is Glucose-6-phosphatase 3 (G6pc3).